The sequence spans 77 residues: Acyl carrier protein (77 aa).

The Carrier domain maps to 1 to 76 (MDREQRIKEI…DVINYLNEKL (76 aa)). The residue at position 36 (S36) is an O-(pantetheine 4'-phosphoryl)serine.

It belongs to the acyl carrier protein (ACP) family. Post-translationally, 4'-phosphopantetheine is transferred from CoA to a specific serine of apo-ACP by AcpS. This modification is essential for activity because fatty acids are bound in thioester linkage to the sulfhydryl of the prosthetic group.

It is found in the cytoplasm. It participates in lipid metabolism; fatty acid biosynthesis. In terms of biological role, carrier of the growing fatty acid chain in fatty acid biosynthesis. The chain is Acyl carrier protein from Hydrogenobaculum sp. (strain Y04AAS1).